The sequence spans 254 residues: RNA polymerase sigma factor SigI8 (254 aa).

The Polymerase core binding motif lies at 61-74; the sequence is DEYSIALIAFNEAI. The H-T-H motif DNA-binding region spans 209-228; the sequence is YKELTERFNLCRRTLEKNRK.

Belongs to the sigma-70 factor family. SigI subfamily. Interacts with RsgI8.

It localises to the cytoplasm. With respect to regulation, negatively regulated by the anti-sigma-I factor RsgI8. In terms of biological role, sigma factors are initiation factors that promote the attachment of RNA polymerase to specific initiation sites and are then released. The sequence is that of RNA polymerase sigma factor SigI8 from Acetivibrio thermocellus (strain ATCC 27405 / DSM 1237 / JCM 9322 / NBRC 103400 / NCIMB 10682 / NRRL B-4536 / VPI 7372) (Clostridium thermocellum).